We begin with the raw amino-acid sequence, 152 residues long: Ribosome maturation factor RimP (152 aa).

It belongs to the RimP family.

The protein resides in the cytoplasm. Functionally, required for maturation of 30S ribosomal subunits. The polypeptide is Ribosome maturation factor RimP (Erwinia tasmaniensis (strain DSM 17950 / CFBP 7177 / CIP 109463 / NCPPB 4357 / Et1/99)).